The primary structure comprises 171 residues: Transcription factor pcr1 (171 aa).

The bZIP domain maps to 10 to 73; it reads DEKRRRILER…FRLKSQLLAH (64 aa). The interval 12–51 is basic motif; sequence KRRRILERNRIAASKFRQKKKEWIKELEQTANAAFEQSKR. The interval 52–66 is leucine-zipper; it reads LQLLLSQLQQEAFRL. The segment at 125–171 is disordered; it reads QMHPSLQGLPPNQHPQMPPSSQQPNSDDVQQHMFSAAGLPRSLGGPI. The segment covering 143-152 has biased composition (low complexity); it reads PSSQQPNSDD.

This sequence belongs to the bZIP family. In terms of assembly, heterodimer of pcr1/mts2 and atf1/mts1.

It localises to the nucleus. Functionally, involved in regulation of gene expression for sexual development. Binds and activates CRE sites (cAMP-response elements, also known as M26 meiotic recombination hotspots). The protein is Transcription factor pcr1 (pcr1) of Schizosaccharomyces pombe (strain 972 / ATCC 24843) (Fission yeast).